Consider the following 54-residue polypeptide: Rubredoxin (54 aa).

Residues 1 to 54 (MKKYQCIVCGWIYDEAEGWPQDGIAPGTKWEDIPDDWTCPDCGVSKVDFEMIEV) enclose the Rubredoxin-like domain. Residues Cys6, Cys9, Cys39, and Cys42 each contribute to the Fe cation site.

The protein belongs to the rubredoxin family. The cofactor is Fe(3+).

It localises to the cytoplasm. It functions in the pathway hydrocarbon metabolism; alkane degradation. Its function is as follows. Involved in the hydrocarbon hydroxylating system, which transfers electrons from NADH to rubredoxin reductase and then through rubredoxin to alkane 1 monooxygenase. This is Rubredoxin (rubA) from Acinetobacter baylyi (strain ATCC 33305 / BD413 / ADP1).